A 720-amino-acid polypeptide reads, in one-letter code: Replication restart protein PriA (720 aa).

The Helicase ATP-binding domain maps to 200–366 (ILMKNCFTSW…LHKKCFYIKF (167 aa)). 213 to 220 (KNNFYLKV) is an ATP binding site. The DEAH box signature appears at 309 to 312 (NQEH). Zn(2+)-binding residues include cysteine 425, cysteine 428, cysteine 434, cysteine 437, cysteine 452, cysteine 455, cysteine 465, and cysteine 468.

Belongs to the helicase family. PriA subfamily. As to quaternary structure, component of the replication restart primosome. Requires Zn(2+) as cofactor.

The catalysed reaction is Couples ATP hydrolysis with the unwinding of duplex DNA by translocating in the 3'-5' direction.. It carries out the reaction ATP + H2O = ADP + phosphate + H(+). Its function is as follows. Initiates the restart of stalled replication forks, which reloads the replicative helicase on sites other than the origin of replication. Recognizes and binds to abandoned replication forks and remodels them to uncover a helicase loading site. Promotes assembly of the primosome at these replication forks. This chain is Replication restart protein PriA, found in Buchnera aphidicola subsp. Schizaphis graminum (strain Sg).